A 149-amino-acid polypeptide reads, in one-letter code: UPF0756 membrane protein MS1439 (149 aa).

4 helical membrane passes run 10–32 (IMLVVLILLGVLSNNNSITISAL), 56–76 (VGIIILTVGVLAPLVSGKVQL), 82–102 (FLNWQMFLSIVIGIAVAWFAG), and 126–146 (VAFLGGIPVGPLIAAGILAVI).

It belongs to the UPF0756 family.

The protein resides in the cell membrane. This Mannheimia succiniciproducens (strain KCTC 0769BP / MBEL55E) protein is UPF0756 membrane protein MS1439.